The sequence spans 131 residues: Large ribosomal subunit protein bL19 (131 aa).

This sequence belongs to the bacterial ribosomal protein bL19 family.

Functionally, this protein is located at the 30S-50S ribosomal subunit interface and may play a role in the structure and function of the aminoacyl-tRNA binding site. In Afipia carboxidovorans (strain ATCC 49405 / DSM 1227 / KCTC 32145 / OM5) (Oligotropha carboxidovorans), this protein is Large ribosomal subunit protein bL19.